The chain runs to 488 residues: Signal recognition particle receptor FtsY (488 aa).

The interval 14 to 82 (DTAPEDVSKP…AVPDDAVHGG (69 aa)) is disordered. The span at 32–67 (VGTSSTGSPVGTGAAMPAAQDAPSPAAPHAIATPDD) shows a compositional bias: low complexity. Residues 287–294 (GVNGVGKT), 369–373 (DTAGR), and 433–436 (TKLD) each bind GTP.

Belongs to the GTP-binding SRP family. FtsY subfamily. As to quaternary structure, part of the signal recognition particle protein translocation system, which is composed of SRP and FtsY. SRP is a ribonucleoprotein composed of Ffh and a 4.5S RNA molecule.

The protein localises to the cell inner membrane. It is found in the cytoplasm. The catalysed reaction is GTP + H2O = GDP + phosphate + H(+). Its function is as follows. Involved in targeting and insertion of nascent membrane proteins into the cytoplasmic membrane. Acts as a receptor for the complex formed by the signal recognition particle (SRP) and the ribosome-nascent chain (RNC). Interaction with SRP-RNC leads to the transfer of the RNC complex to the Sec translocase for insertion into the membrane, the hydrolysis of GTP by both Ffh and FtsY, and the dissociation of the SRP-FtsY complex into the individual components. This is Signal recognition particle receptor FtsY from Nitratidesulfovibrio vulgaris (strain ATCC 29579 / DSM 644 / CCUG 34227 / NCIMB 8303 / VKM B-1760 / Hildenborough) (Desulfovibrio vulgaris).